Consider the following 510-residue polypeptide: ATP synthase subunit alpha (510 aa).

169 to 176 lines the ATP pocket; the sequence is GDRQTGKT.

Belongs to the ATPase alpha/beta chains family. As to quaternary structure, F-type ATPases have 2 components, CF(1) - the catalytic core - and CF(0) - the membrane proton channel. CF(1) has five subunits: alpha(3), beta(3), gamma(1), delta(1), epsilon(1). CF(0) has four main subunits: a(1), b(1), b'(1) and c(9-12).

The protein resides in the cell inner membrane. The enzyme catalyses ATP + H2O + 4 H(+)(in) = ADP + phosphate + 5 H(+)(out). Its function is as follows. Produces ATP from ADP in the presence of a proton gradient across the membrane. The alpha chain is a regulatory subunit. This is ATP synthase subunit alpha from Rhodopseudomonas palustris (strain BisB5).